The chain runs to 164 residues: Glycine cleavage system H protein, mitochondrial (164 aa).

The transit peptide at 1–39 directs the protein to the mitochondrion; it reads MAWLVLRRLGPVLAPRCPRLSLRPQVPAVRRLGTGSLLL. One can recognise a Lipoyl-binding domain in the interval 57–139; it reads IGTVGISNFA…YQDGWLIKMT (83 aa). K98 is subject to N6-lipoyllysine.

The protein belongs to the GcvH family. As to quaternary structure, the glycine cleavage system is composed of four proteins: P (GLDC), T (GCST), L (DLD) and H (GCSH). Interacts with GLDC. It depends on (R)-lipoate as a cofactor.

It localises to the mitochondrion. Its function is as follows. The glycine cleavage system catalyzes the degradation of glycine. The H protein (GCSH) shuttles the methylamine group of glycine from the P protein (GLDC) to the T protein (GCST). Has a pivotal role in the lipoylation of enzymes involved in cellular energetics such as the mitochondrial dihydrolipoyllysine-residue acetyltransferase component of pyruvate dehydrogenase complex (DLAT), and the mitochondrial dihydrolipoyllysine-residue succinyltransferase component of 2-oxoglutarate dehydrogenase complex (DLST). The sequence is that of Glycine cleavage system H protein, mitochondrial from Gallus gallus (Chicken).